We begin with the raw amino-acid sequence, 109 residues long: Nucleoid-associated protein YbaB (109 aa).

This sequence belongs to the YbaB/EbfC family. In terms of assembly, homodimer.

Its subcellular location is the cytoplasm. It is found in the nucleoid. In terms of biological role, binds to DNA and alters its conformation. May be involved in regulation of gene expression, nucleoid organization and DNA protection. In Escherichia coli O8 (strain IAI1), this protein is Nucleoid-associated protein YbaB.